The following is a 123-amino-acid chain: Small ribosomal subunit protein uS12cz/uS12cy (123 aa).

It belongs to the universal ribosomal protein uS12 family. Part of the 30S ribosomal subunit.

It localises to the plastid. The protein localises to the chloroplast. In terms of biological role, with S4 and S5 plays an important role in translational accuracy. Located at the interface of the 30S and 50S subunits. The polypeptide is Small ribosomal subunit protein uS12cz/uS12cy (rps12-A) (Angiopteris evecta (Mule's foot fern)).